Here is a 2703-residue protein sequence, read N- to C-terminus: Neurogenic locus Notch protein (2703 aa).

An N-terminal signal peptide occupies residues 1-52; that stretch reads MQSQRSRRRSRAPNTWICFWINKMHAVASLPASLPLLLLTLAFANLPNTVRG. Over 53-1745 the chain is Extracellular; sequence TDTALVAASC…NGEPPANVKY (1693 aa). EGF-like domains lie at 58–95, 96–136, 139–176, and 177–215; these read VAASCTSVGCQNGGTCVTQLNGKTYCACDSHYVGDYCE, HRNP…SLCE, VPNACDHVTCLNGGTCQLKTLEEYTCACANGYTGERCE, and TKNLCASSPCRNGATCTALAGSSSFTCSCPPGFTGDTCS. 24 disulfides stabilise this stretch: cysteine 62-cysteine 73, cysteine 67-cysteine 83, cysteine 85-cysteine 94, cysteine 100-cysteine 111, cysteine 105-cysteine 124, cysteine 126-cysteine 135, cysteine 143-cysteine 154, cysteine 148-cysteine 164, cysteine 166-cysteine 175, cysteine 181-cysteine 192, cysteine 186-cysteine 203, cysteine 205-cysteine 214, cysteine 221-cysteine 232, cysteine 226-cysteine 241, cysteine 243-cysteine 252, cysteine 259-cysteine 270, cysteine 264-cysteine 279, cysteine 281-cysteine 290, cysteine 297-cysteine 308, cysteine 302-cysteine 317, cysteine 319-cysteine 328, cysteine 335-cysteine 349, cysteine 343-cysteine 358, and cysteine 360-cysteine 369. The O-linked (Fuc...) threonine glycan is linked to threonine 72. Threonine 110 carries O-linked (Fuc...) threonine glycosylation. A glycan (O-linked (Fuc...) threonine) is linked at threonine 153. An O-linked (Glc...) serine glycan is attached at serine 183. Threonine 191 carries O-linked (Fuc...) threonine glycosylation. O-linked (GlcNAc...) threonine glycosylation occurs at threonine 210. Residues 217–253 form the EGF-like 5; calcium-binding domain; the sequence is DIEECQSNPCKYGGTCVNTHGSYQCMCPTGYTGKDCD. O-linked (Glc...) serine glycosylation is present at serine 223. O-linked (Fuc...) threonine glycosylation occurs at threonine 231. One can recognise an EGF-like 6 domain in the interval 255–291; the sequence is KYKPCSPSPCQNGGICRSNGLSYECKCPKGFEGKNCE. One can recognise an EGF-like 7; calcium-binding domain in the interval 293–329; it reads NYDDCLGHLCQNGGTCIDGISDYTCRCPPNFTGRFCQ. An O-linked (Fuc...) threonine glycan is attached at threonine 307. The N-linked (GlcNAc...) asparagine glycan is linked to asparagine 322. Residues 331–370 form the EGF-like 8; calcium-binding domain; that stretch reads DVDECAQRDHPVCQNGATCTNTHGSYSCICVNGWAGLDCS. Threonine 348 carries O-linked (Fuc...) threonine glycosylation. Asparagine 371 is a glycosylation site (N-linked (GlcNAc...) asparagine). The EGF-like 9; calcium-binding domain occupies 372–408; that stretch reads NTDDCKQAACFYGATCIDGVGSFYCQCTKGKTGLLCH. Intrachain disulfides connect cysteine 376-cysteine 387, cysteine 381-cysteine 396, cysteine 398-cysteine 407, cysteine 413-cysteine 424, cysteine 418-cysteine 435, cysteine 437-cysteine 446, cysteine 453-cysteine 465, and cysteine 459-cysteine 474. O-linked (Fuc...) threonine glycosylation is present at threonine 386. In terms of domain architecture, EGF-like 10 spans 409 to 447; sequence LDDACTSNPCHADAICDTSPINGSYACSCATGYKGVDCS. Serine 427 is a glycosylation site (O-linked (Glc...) serine). The N-linked (GlcNAc...) asparagine glycan is linked to asparagine 430. Residues 449 to 486 form the EGF-like 11; calcium-binding domain; sequence DIDECDQGSPCEHNGICVNTPGSYRCNCSQGFTGPRCE. A glycan (N-linked (GlcNAc...) asparagine) is linked at asparagine 475. 78 disulfide bridges follow: cysteine 476/cysteine 485, cysteine 492/cysteine 503, cysteine 497/cysteine 512, cysteine 514/cysteine 523, cysteine 530/cysteine 541, cysteine 535/cysteine 550, cysteine 552/cysteine 561, cysteine 568/cysteine 579, cysteine 573/cysteine 588, cysteine 590/cysteine 599, cysteine 606/cysteine 616, cysteine 611/cysteine 625, cysteine 627/cysteine 636, cysteine 643/cysteine 654, cysteine 648/cysteine 663, cysteine 665/cysteine 674, cysteine 681/cysteine 692, cysteine 686/cysteine 701, cysteine 703/cysteine 712, cysteine 719/cysteine 730, cysteine 724/cysteine 739, cysteine 741/cysteine 750, cysteine 757/cysteine 768, cysteine 762/cysteine 777, cysteine 779/cysteine 788, cysteine 795/cysteine 806, cysteine 800/cysteine 815, cysteine 817/cysteine 826, cysteine 833/cysteine 844, cysteine 838/cysteine 853, cysteine 855/cysteine 864, cysteine 871/cysteine 882, cysteine 876/cysteine 893, cysteine 895/cysteine 904, cysteine 911/cysteine 923, cysteine 917/cysteine 932, cysteine 934/cysteine 943, cysteine 950/cysteine 961, cysteine 955/cysteine 970, cysteine 972/cysteine 981, cysteine 988/cysteine 999, cysteine 993/cysteine 1008, cysteine 1010/cysteine 1019, cysteine 1026/cysteine 1037, cysteine 1031/cysteine 1046, cysteine 1048/cysteine 1057, cysteine 1064/cysteine 1075, cysteine 1069/cysteine 1084, cysteine 1086/cysteine 1095, cysteine 1102/cysteine 1113, cysteine 1107/cysteine 1122, cysteine 1124/cysteine 1133, cysteine 1155/cysteine 1160, cysteine 1171/cysteine 1180, cysteine 1187/cysteine 1198, cysteine 1192/cysteine 1207, cysteine 1209/cysteine 1218, cysteine 1225/cysteine 1236, cysteine 1230/cysteine 1245, cysteine 1247/cysteine 1256, cysteine 1263/cysteine 1274, cysteine 1268/cysteine 1283, cysteine 1285/cysteine 1294, cysteine 1301/cysteine 1314, cysteine 1306/cysteine 1323, cysteine 1325/cysteine 1334, cysteine 1341/cysteine 1352, cysteine 1346/cysteine 1361, cysteine 1363/cysteine 1372, cysteine 1379/cysteine 1389, cysteine 1384/cysteine 1400, cysteine 1402/cysteine 1411, cysteine 1419/cysteine 1430, cysteine 1424/cysteine 1439, cysteine 1441/cysteine 1450, cysteine 1482/cysteine 1505, cysteine 1487/cysteine 1500, and cysteine 1496/cysteine 1512. An O-linked (GlcNAc...) threonine glycan is attached at threonine 481. The region spanning 488–524 is the EGF-like 12; calcium-binding domain; the sequence is NINECESHPCQNEGSCLDDPGTFRCVCMPGFTGTQCE. Residue serine 494 is glycosylated (O-linked (Glc...) serine). O-linked (Fuc...) serine glycosylation occurs at serine 502. Threonine 519 carries O-linked (GlcNAc...) threonine glycosylation. The EGF-like 13; calcium-binding domain maps to 526 to 562; sequence DIDECQSNPCLNDGTCHDKINGFKCSCALGFTGARCQ. O-linked (Glc...) serine glycosylation is present at serine 532. Residues 564–600 form the EGF-like 14; calcium-binding domain; it reads NIDDCQSQPCRNRGICHDSIAGYSCECPPGYTGTSCE. An O-linked (Glc...) serine glycan is attached at serine 570. Residue threonine 595 is glycosylated (O-linked (GlcNAc...) threonine). The EGF-like 15; calcium-binding domain maps to 602–637; sequence NINDCDSNPCHRGKCIDDVNSFKCLCDPGYTGYICQ. Residue serine 608 is glycosylated (O-linked (Glc...) serine). Residues 639–675 form the EGF-like 16; calcium-binding domain; the sequence is QINECESNPCQFDGHCQDRVGSYYCQCQAGTSGKNCE. An O-linked (Glc...) serine glycan is attached at serine 645. The EGF-like 17; calcium-binding domain occupies 677–713; sequence NVNECHSNPCNNGATCIDGINSYKCQCVPGFTGQHCE. An O-linked (Glc...) serine glycan is attached at serine 683. Threonine 691 is a glycosylation site (O-linked (Fuc...) threonine). The region spanning 715-751 is the EGF-like 18; calcium-binding domain; it reads NVDECISSPCANNGVCIDQVNGYKCECPRGFYDAHCL. Serine 721 carries O-linked (Glc...) serine glycosylation. One can recognise an EGF-like 19; calcium-binding domain in the interval 753–789; the sequence is DVDECASNPCVNEGRCEDGINEFICHCPPGYTGKRCE. O-linked (Glc...) serine glycosylation occurs at serine 759. Positions 791-827 constitute an EGF-like 20; calcium-binding domain; that stretch reads DIDECSSNPCQHGGTCYDKLNAFSCQCMPGYTGQKCE. Serine 797 carries an O-linked (Glc...) serine glycan. An O-linked (Fuc...) threonine glycan is attached at threonine 805. O-linked (GlcNAc...) threonine glycosylation is present at threonine 822. In terms of domain architecture, EGF-like 21; calcium-binding spans 829 to 865; that stretch reads NIDDCVTNPCGNGGTCIDKVNGYKCVCKVPFTGRDCE. Residue threonine 843 is glycosylated (O-linked (Fuc...) threonine). The EGF-like 22 domain occupies 867 to 905; the sequence is KMDPCASNRCKNEAKCTPSSNFLDFSCTCKLGYTGRYCD. Residues 907 to 944 form the EGF-like 23; calcium-binding domain; the sequence is DIDECSLSSPCRNGASCLNVPGSYRCLCTKGYEGRDCA. Serine 922 carries an O-linked (Fuc...) serine glycan. Positions 946 to 982 constitute an EGF-like 24; calcium-binding domain; sequence NTDDCASFPCQNGGTCLDGIGDYSCLCVDGFDGKHCE. Serine 952 carries O-linked (Glc...) serine glycosylation. The O-linked (Fuc...) threonine glycan is linked to threonine 960. The EGF-like 25 domain maps to 984 to 1020; it reads DINECLSQPCQNGATCSQYVNSYTCTCPLGFSGINCQ. Residue serine 990 is glycosylated (O-linked (Glc...) serine). An O-linked (Fuc...) threonine glycan is attached at threonine 998. The 37-residue stretch at 1022–1058 folds into the EGF-like 26; calcium-binding domain; the sequence is NDEDCTESSCLNGGSCIDGINGYNCSCLAGYSGANCQ. O-linked (Fuc...) serine glycosylation is present at serine 1036. Asparagine 1045 is a glycosylation site (N-linked (GlcNAc...) asparagine). EGF-like domains lie at 1060-1096, 1098-1134, and 1136-1181; these read KLNKCDSNPCLNGATCHEQNNEYTCHCPSGFTGKQCS, YVDWCGQSPCENGATCSQMKHQFSCKCSAGWTGKLCD, and QTIS…SYCQ. Residue serine 1066 is glycosylated (O-linked (Glc...) serine). O-linked (Fuc...) threonine glycosylation is present at threonine 1074. Threonine 1112 carries O-linked (Fuc...) threonine glycosylation. An N-linked (GlcNAc...) asparagine glycan is attached at asparagine 1157. The EGF-like 30; calcium-binding domain maps to 1183–1219; sequence EIDECQSQPCQNGGTCRDLIGAYECQCRQGFQGQNCE. Residue serine 1189 is glycosylated (O-linked (Glc...) serine). O-linked (Fuc...) threonine glycosylation is present at threonine 1197. Residues 1221–1257 form the EGF-like 31; calcium-binding domain; it reads NIDDCAPNPCQNGGTCHDRVMNFSCSCPPGTMGIICE. O-linked (Fuc...) threonine glycosylation is present at threonine 1235. The N-linked (GlcNAc...) asparagine glycan is linked to asparagine 1242. An EGF-like 32; calcium-binding domain is found at 1259–1295; sequence NKDDCKPGACHNNGSCIDRVGGFECVCQPGFVGARCE. The N-linked (GlcNAc...) asparagine glycan is linked to asparagine 1271. The O-linked (Fuc...) serine glycan is linked to serine 1273. EGF-like domains are found at residues 1297–1335, 1337–1373, 1375–1412, and 1415–1451; these read DINECLSNPCSNAGTLDCVQLVNNYHCNCRPGHMGRHCE, KVDFCAQSPCQNGGNCNIRQSGHHCICNNGFYGKNCE, SGQDCDSNPCRVGNCVVADEGFGYRCECPRGTLGEHCE, and TLDECSPNPCAQGAACEDLLGDYECLCPSKWKGKRCD. O-linked (Glc...) serine glycosylation occurs at serine 1303. Serine 1381 carries an O-linked (Glc...) serine glycan. LNR repeat units lie at residues 1482-1521, 1522-1557, and 1559-1599; these read CDKRGCTEKQGNGICDSDCNTYACNFDGNDCSLGINPWAN, CTANECWNKFKNGKCNEECNNAACHYDGHDCERKLK, and CDSL…TQSP. Asparagine 1521 carries N-linked (GlcNAc...) asparagine glycosylation. Disulfide bonds link cysteine 1522-cysteine 1545, cysteine 1527-cysteine 1540, cysteine 1536-cysteine 1552, cysteine 1559-cysteine 1585, cysteine 1567-cysteine 1580, and cysteine 1576-cysteine 1592. 2 N-linked (GlcNAc...) asparagine glycosylation sites follow: asparagine 1594 and asparagine 1627. A helical transmembrane segment spans residues 1746 to 1766; it reads VITGIILVIIALAFFGMVLST. The Cytoplasmic segment spans residues 1767–2703; sequence QRKRAHGVTW…ANKGSEAIYI (937 aa). Residues 1810-1850 form a disordered region; that stretch reads QSQGVGQPGAHWSDDESDMPLPKRQRSDPVSGVGLGNNGGY. ANK repeat units lie at residues 1901-1945, 1950-1979, 1983-2013, 2017-2046, 2050-2079, 2083-2112, and 2116-2139; these read CGLT…ELNA, TGETSLHLAARFARADAAKRLLDAGADANC, TGRTPLHAAVAADAMGVFQILLRNRATNLNA, DGTTPLILAARLAIEGMVEDLITADADINA, SGKTALHWAAAVNNTEAVNILLMHHANRDA, KDETPLFLAAREGSYEACKALLDNFANREI, and MDRLPRDVASERLHHDIVRLLDEH. Residues 2172–2257 form a disordered region; sequence TVISAGNGGN…LTGGVSGVPG (86 aa). Positions 2228 to 2238 are enriched in low complexity; the sequence is KKTSAASKKAA. The tract at residues 2325–2328 is interaction with Nedd4; the sequence is PPSY. 4 disordered regions span residues 2399 to 2452, 2488 to 2524, 2579 to 2620, and 2632 to 2703; these read SGAG…PTSP, GGGGGGGVGQGPQNSPVSLGIISPTGSDMGIMLAPPQ, LDLN…PSSQ, and PSSQ…AIYI. Over residues 2414–2429 the composition is skewed to polar residues; sequence PYSNQSPPHSVQSSLA. The residue at position 2447 (serine 2447) is a Phosphoserine. The segment covering 2488–2497 has biased composition (gly residues); that stretch reads GGGGGGGVGQ. Residues 2598–2619 show a composition bias toward low complexity; that stretch reads PPSIQSSMSGSSPSTNMLSPSS. Polar residues predominate over residues 2632 to 2653; that stretch reads PSSQHSGGHTPQHLVQTLDSYP. Residues 2659 to 2675 are compositionally biased toward low complexity; the sequence is SPGHWSSSSPRSNSDWS. The segment covering 2677-2687 has biased composition (polar residues); it reads GVQSPAANNLY.

It belongs to the NOTCH family. Homomer. Interacts with Su(H) when activated. Interacts with Dx via its ANK repeats. Interacts with Delta via the EGF repeats and the Delta EGF repeats. Interacts with Nedd4 and Su(dx). Interacts with O-fut1; the interaction glycosylates N and transports N to early endosomes. Interacts with Akap200; the interaction stabilizes N/Notch protein levels by preventing Cbl-mediated ubiquitination and subsequent lysosomal degradation of N/Notch. In terms of processing, upon binding its ligands such as Delta or Serrate, it is cleaved (S2 cleavage) in its extracellular domain, close to the transmembrane domain. S2 cleavage is probably mediated by Kuz. It is then cleaved (S3 cleavage) downstream of its transmembrane domain, releasing it from the cell membrane. S3 cleavage requires Psn. Post-translationally, O-glycosylated. Three forms of O-glycosylation (O-fucosylation, O-glucosylation and O-GlcNAcylation) are detected. O-fucosylated by O-fut1 and fng in the EGF repeat domain inhibits both Serrate/Ser- and Delta/Dl-binding. O-glucosylation by rumi in the endoplasmic reticulum is necessary for correct folding and signaling. Ubiquitinated by various ubiquitin ligases; which promotes ligand-independent endocytosis and proteasomal degradation. Ubiquitinated by Nedd4. May also be ubiquitinated by Su(dx) and Cbl. Mono-ubiquitinated, possibly by dx/deltex; this may be involved in the ESCRT-III mediated targeting to multivesicular bodies.

Its subcellular location is the cell membrane. The protein localises to the endosome. The protein resides in the multivesicular body. It is found in the nucleus. Essential signaling protein which has a major role in many developmental processes. Functions as a receptor for membrane-bound ligands Delta and Serrate to regulate cell-fate determination. Upon ligand activation, and releasing from the cell membrane, the Notch intracellular domain (NICD) forms a transcriptional activator complex with Su(H) (Suppressor of hairless) and activates genes of the E(spl) complex. Regulates oogenesis, the differentiation of the ectoderm and the development of the central and peripheral nervous system, eye, wing disk, muscles and segmental appendages such as antennae and legs, through lateral inhibition or induction. Regulates neuroblast self-renewal, identity and proliferation through the regulation of bHLH-O proteins; in larval brains, involved in the maintenance of type II neuroblast self-renewal and identity by suppressing erm expression together with pnt; might also regulate dpn expression through the activation of the transcriptional regulator Su(H). Targeted for ESCRT-mediated endosomal sequestration and lysosomal degradation by various E3 ubiquitin ligases to regulate the Notch signaling pathway. Can undergo ligand-dependent and non-canonical ligand-independent activation. Ligand-independent activation is dependent on endosome acidification and probably occurs in late endosomes or lysosome. Ectopic ligand-independent activation occurs when disruption of the endolysosomal pathway, particularly of the ESCRT-III complex, prevents sequestration of the receptor in intraluminal vesicles of multivesicular bodies. This chain is Neurogenic locus Notch protein, found in Drosophila melanogaster (Fruit fly).